The following is a 192-amino-acid chain: MITISETAQAHFVNLLSDQPEGTHIRVFVISPGTAQAECGVSYCPPDAVEADDTELEFNGFNAMVDEKSAPFLEEATIDFVTDQLGSQLTLKAPNAKMRKVSGDAPLVERIEYVIQSEINPQLASHGGNIMLVEITEDGIAVLQFGGGCNGCSMVDVTLKDGIEKQLLDMFPGELTGVKDVTEHQHGDHSYQ.

2 residues coordinate [4Fe-4S] cluster: cysteine 149 and cysteine 152.

Belongs to the NfuA family. As to quaternary structure, homodimer. [4Fe-4S] cluster serves as cofactor.

Involved in iron-sulfur cluster biogenesis. Binds a 4Fe-4S cluster, can transfer this cluster to apoproteins, and thereby intervenes in the maturation of Fe/S proteins. Could also act as a scaffold/chaperone for damaged Fe/S proteins. This Shewanella piezotolerans (strain WP3 / JCM 13877) protein is Fe/S biogenesis protein NfuA.